The sequence spans 138 residues: Vesicle transport protein GOT1B (138 aa).

An N-acetylmethionine modification is found at Met1. Topologically, residues 1–9 (MISLTDTQK) are cytoplasmic. The helical transmembrane segment at 10–30 (IGMGLTGFGVFFLFFGMILFF) threads the bilayer. Residues 31–32 (DK) are Lumenal-facing. The helical transmembrane segment at 33 to 53 (ALLAIGNVLFVAGLAFVIGLE) threads the bilayer. Over 54–68 (RTFRFFFQKHKMKAT) the chain is Cytoplasmic. Residues 69 to 89 (GFFLGGVFVVLIGWPLIGMIF) traverse the membrane as a helical segment. Glu90 is a topological domain (lumenal). The helical transmembrane segment at 91–109 (IYGFFLLFRGFFPVVVGFI) threads the bilayer. The Cytoplasmic segment spans residues 110-138 (RRVPVLGSLLNLPGIRSFVDKVGESNNMV).

The protein belongs to the GOT1 family.

The protein resides in the golgi apparatus membrane. In terms of biological role, may be involved in fusion of ER-derived transport vesicles with the Golgi complex. The chain is Vesicle transport protein GOT1B from Bos taurus (Bovine).